The chain runs to 1607 residues: Phosphatidylinositol 3-kinase piki-1 (1607 aa).

A UIM domain is found at 2-21 (SDDEELQLAIEISKKTFKDE). Disordered stretches follow at residues 54-91 (EANSPGPSSYSGSLATSPIDFRPVYNEPRAGPIPHSQS), 105-128 (STSQPPAFPPPPRPPKPEQYKFPP), and 142-182 (PPPP…SFAS). Residues 58 to 69 (PGPSSYSGSLAT) are compositionally biased toward polar residues. Pro residues predominate over residues 158–169 (PPVPIHPTPPVS). Residues 362–453 (ASTVKVVVYK…GDDVKLDLGV (92 aa)) enclose the PI3K-RBD domain. The 169-residue stretch at 598–766 (KMDFLQIMLN…KIWDTEIYFP (169 aa)) folds into the C2 PI3K-type domain. One can recognise a PIK helical domain in the interval 776-953 (PQDFATLDIE…AIRCQNLQQK (178 aa)). In terms of domain architecture, PI3K/PI4K catalytic spans 1029–1303 (RIEECSVFNS…MIQNSLGSAF (275 aa)). A G-loop region spans residues 1035-1041 (VFNSNAK). Positions 1168–1176 (GIGDRHNDN) are catalytic loop. Residues 1187–1213 (HIDFGKYMGDWQMAAGFRRDRVPFVFT) are activation loop. The region spanning 1344 to 1458 (GRISRVTVLK…TFFHSILRDN (115 aa)) is the PX domain. The region spanning 1472–1601 (SQCQIYLKIE…KNCRTLEGWF (130 aa)) is the C2 domain.

This sequence belongs to the PI3/PI4-kinase family.

It is found in the cell projection. The protein localises to the phagocytic cup. The protein resides in the cytoplasmic vesicle. It localises to the phagosome membrane. Its subcellular location is the cytoplasm. It catalyses the reaction a 1,2-diacyl-sn-glycero-3-phospho-(1D-myo-inositol) + ATP = a 1,2-diacyl-sn-glycero-3-phospho-(1D-myo-inositol-3-phosphate) + ADP + H(+). In terms of biological role, phosphatidylinositol 3-kinase involved in clearance of apoptotic cell corpses by phagosomes. Phagosome maturation requires two sequential and non-overlapping pulses of phosphatidylinositol-3-phosphate (PI3P) on the vesicle surface which mediates recruitment of sortins snx-1 and lst-4 and small GTPases rab-5, rab-2 and rab-7. The first pulse is initiated by piki-1, then maintained by vps-34 which also produces the second pulse. Unlike vps-34, not involved in the formation of PI3P in early endosomes. The chain is Phosphatidylinositol 3-kinase piki-1 from Caenorhabditis elegans.